The chain runs to 363 residues: Heat-inducible transcription repressor HrcA (363 aa).

It belongs to the HrcA family.

Its function is as follows. Negative regulator of class I heat shock genes (grpE-dnaK-dnaJ and groELS operons). Prevents heat-shock induction of these operons. The protein is Heat-inducible transcription repressor HrcA of Rhizobium radiobacter (Agrobacterium tumefaciens).